Here is an 80-residue protein sequence, read N- to C-terminus: DNA-binding protein HU-like (80 aa).

It belongs to the bacterial histone-like protein family.

Histone-like DNA-binding protein which is capable of wrapping DNA to stabilize it, and thus to prevent its denaturation under extreme environmental conditions. In Rickettsia conorii (strain ATCC VR-613 / Malish 7), this protein is DNA-binding protein HU-like.